Here is a 194-residue protein sequence, read N- to C-terminus: ATP-dependent Clp protease proteolytic subunit (194 aa).

Serine 98 functions as the Nucleophile in the catalytic mechanism. Residue histidine 123 is part of the active site.

It belongs to the peptidase S14 family. Fourteen ClpP subunits assemble into 2 heptameric rings which stack back to back to give a disk-like structure with a central cavity, resembling the structure of eukaryotic proteasomes.

Its subcellular location is the cytoplasm. The catalysed reaction is Hydrolysis of proteins to small peptides in the presence of ATP and magnesium. alpha-casein is the usual test substrate. In the absence of ATP, only oligopeptides shorter than five residues are hydrolyzed (such as succinyl-Leu-Tyr-|-NHMec, and Leu-Tyr-Leu-|-Tyr-Trp, in which cleavage of the -Tyr-|-Leu- and -Tyr-|-Trp bonds also occurs).. Cleaves peptides in various proteins in a process that requires ATP hydrolysis. Has a chymotrypsin-like activity. Plays a major role in the degradation of misfolded proteins. This chain is ATP-dependent Clp protease proteolytic subunit, found in Clostridium kluyveri (strain NBRC 12016).